Reading from the N-terminus, the 246-residue chain is 1-(5-phosphoribosyl)-5-[(5-phosphoribosylamino)methylideneamino] imidazole-4-carboxamide isomerase (246 aa).

Asp10 (proton acceptor) is an active-site residue. Asp131 functions as the Proton donor in the catalytic mechanism.

It belongs to the HisA/HisF family.

Its subcellular location is the cytoplasm. The enzyme catalyses 1-(5-phospho-beta-D-ribosyl)-5-[(5-phospho-beta-D-ribosylamino)methylideneamino]imidazole-4-carboxamide = 5-[(5-phospho-1-deoxy-D-ribulos-1-ylimino)methylamino]-1-(5-phospho-beta-D-ribosyl)imidazole-4-carboxamide. It participates in amino-acid biosynthesis; L-histidine biosynthesis; L-histidine from 5-phospho-alpha-D-ribose 1-diphosphate: step 4/9. The sequence is that of 1-(5-phosphoribosyl)-5-[(5-phosphoribosylamino)methylideneamino] imidazole-4-carboxamide isomerase from Acidiphilium cryptum (strain JF-5).